A 457-amino-acid chain; its full sequence is RuvB-like helicase 1 (457 aa).

Residue 72–79 (GAPGTGKT) participates in ATP binding.

It belongs to the RuvB family. In terms of assembly, may form heterododecamers with RVB2. Component of the SWR1 chromatin remodeling complex, the INO80 chromatin remodeling complex, and of the R2TP complex.

The protein resides in the nucleus. It catalyses the reaction ATP + H2O = ADP + phosphate + H(+). Its function is as follows. DNA helicase which participates in several chromatin remodeling complexes, including the SWR1 and the INO80 complexes. The SWR1 complex mediates the ATP-dependent exchange of histone H2A for the H2A variant HZT1 leading to transcriptional regulation of selected genes by chromatin remodeling. The INO80 complex remodels chromatin by shifting nucleosomes and is involved in DNA repair. Also involved in pre-rRNA processing. This Debaryomyces hansenii (strain ATCC 36239 / CBS 767 / BCRC 21394 / JCM 1990 / NBRC 0083 / IGC 2968) (Yeast) protein is RuvB-like helicase 1 (RBV1).